A 307-amino-acid chain; its full sequence is Ribosomal RNA small subunit methyltransferase H (307 aa).

Residues 32–34 (GGH), Asp52, Phe78, Asp100, and Gln107 each bind S-adenosyl-L-methionine.

It belongs to the methyltransferase superfamily. RsmH family.

Its subcellular location is the cytoplasm. The catalysed reaction is cytidine(1402) in 16S rRNA + S-adenosyl-L-methionine = N(4)-methylcytidine(1402) in 16S rRNA + S-adenosyl-L-homocysteine + H(+). Specifically methylates the N4 position of cytidine in position 1402 (C1402) of 16S rRNA. The chain is Ribosomal RNA small subunit methyltransferase H from Coxiella burnetii (strain CbuG_Q212) (Coxiella burnetii (strain Q212)).